Consider the following 145-residue polypeptide: UPF0260 protein VS_0923 (145 aa).

It belongs to the UPF0260 family.

This is UPF0260 protein VS_0923 from Vibrio atlanticus (strain LGP32) (Vibrio splendidus (strain Mel32)).